The sequence spans 546 residues: CTP synthase (546 aa).

The segment at 1 to 267 (MSKFVFVTGG…AQQTLELLNL (267 aa)) is amidoligase domain. S13 is a binding site for CTP. S13 serves as a coordination point for UTP. ATP-binding positions include 14-19 (SIGKGI) and D71. D71 and E141 together coordinate Mg(2+). CTP contacts are provided by residues 148–150 (DIE), 188–193 (KTKPTQ), and K224. Residues 188–193 (KTKPTQ) and K224 each bind UTP. Positions 292–534 (EIAIVGKYVQ…MKAALKGREE (243 aa)) constitute a Glutamine amidotransferase type-1 domain. G354 provides a ligand contact to L-glutamine. Catalysis depends on C381, which acts as the Nucleophile; for glutamine hydrolysis. L-glutamine is bound by residues 382-385 (LGMQ), E405, and R462. Residues H507 and E509 contribute to the active site.

The protein belongs to the CTP synthase family. In terms of assembly, homotetramer.

The enzyme catalyses UTP + L-glutamine + ATP + H2O = CTP + L-glutamate + ADP + phosphate + 2 H(+). It catalyses the reaction L-glutamine + H2O = L-glutamate + NH4(+). The catalysed reaction is UTP + NH4(+) + ATP = CTP + ADP + phosphate + 2 H(+). Its pathway is pyrimidine metabolism; CTP biosynthesis via de novo pathway; CTP from UDP: step 2/2. With respect to regulation, allosterically activated by GTP, when glutamine is the substrate; GTP has no effect on the reaction when ammonia is the substrate. The allosteric effector GTP functions by stabilizing the protein conformation that binds the tetrahedral intermediate(s) formed during glutamine hydrolysis. Inhibited by the product CTP, via allosteric rather than competitive inhibition. In terms of biological role, catalyzes the ATP-dependent amination of UTP to CTP with either L-glutamine or ammonia as the source of nitrogen. Regulates intracellular CTP levels through interactions with the four ribonucleotide triphosphates. The protein is CTP synthase of Microcystis aeruginosa (strain NIES-843 / IAM M-2473).